The sequence spans 872 residues: Metabotropic glutamate receptor 2 (872 aa).

The first 18 residues, 1-18 (MESLLGFLALLLLWGAVA), serve as a signal peptide directing secretion. Over 19–567 (EGPAKKVLTL…QEYIRWGDAW (549 aa)) the chain is Extracellular. Residues Cys-50 and Cys-92 are joined by a disulfide bond. L-glutamate contacts are provided by Arg-57, Arg-61, Ser-145, Ala-166, and Thr-168. N-linked (GlcNAc...) asparagine glycans are attached at residues Asn-203 and Asn-286. 7 disulfide bridges follow: Cys-234–Cys-518, Cys-355–Cys-362, Cys-400–Cys-407, Cys-500–Cys-519, Cys-504–Cys-522, Cys-525–Cys-537, and Cys-540–Cys-553. L-glutamate is bound at residue Asp-295. N-linked (GlcNAc...) asparagine glycosylation occurs at Asn-338. Residue Lys-377 participates in L-glutamate binding. Residue Asn-402 is glycosylated (N-linked (GlcNAc...) asparagine). N-linked (GlcNAc...) asparagine glycosylation occurs at Asn-547. The chain crosses the membrane as a helical span at residues 568–590 (AVGPVTIACLGALATLFVLGVFV). The Cytoplasmic segment spans residues 591 to 604 (RHNATPVVKASGRE). A helical transmembrane segment spans residues 605 to 625 (LCYILLGGVFLCYCMTFVFIA). The Extracellular segment spans residues 626–636 (KPSTAVCTLRR). A disulfide bridge links Cys-632 with Cys-721. The helical transmembrane segment at 637-655 (LGLGTAFSVCYSALLTKTN) threads the bilayer. The Cytoplasmic portion of the chain corresponds to 656 to 679 (RIARIFGGAREGAQRPRFISPASQ). An important for interaction with HTR2A region spans residues 677–685 (ASQVAICLA). The chain crosses the membrane as a helical span at residues 680–700 (VAICLALISGQLLIVAAWLVV). Topologically, residues 701–725 (EAPGTGKETAPERREVVTLRCNHRD) are extracellular. A helical transmembrane segment spans residues 726 to 747 (ASMLGSLAYNVLLIALCTLYAF). Over 748–760 (KTRKCPENFNEAK) the chain is Cytoplasmic. A helical membrane pass occupies residues 761-783 (FIGFTMYTTCIIWLAFLPIFYVT). Residues 784–793 (SSDYRVQTTT) lie on the Extracellular side of the membrane. A helical transmembrane segment spans residues 794-819 (MCVSVSLSGSVVLGCLFAPKLHIILF). Residues 820-872 (QPQKNVVSHRAPTSRFGSAAPRASANLGQGSGSQFVPTVCNGREVVDSTTSSL) are Cytoplasmic-facing.

It belongs to the G-protein coupled receptor 3 family. As to quaternary structure, forms heterodimers with GRM3 or GRM4. Interacts with GNAI1. Interacts with TAMALIN. Interacts with HTR2A. As to expression, is widely distributed in the CNS and prominent expression is seen in Golgi cells of the cerebellum and some particular neuronal cells in other brain regions.

The protein localises to the cell membrane. The protein resides in the synapse. It localises to the cell projection. It is found in the dendrite. In terms of biological role, dimeric G protein-coupled receptor which is activated by the excitatory neurotransmitter L-glutamate. Plays critical roles in modulating synaptic transmission and neuronal excitability. Upon activation by glutamate, inhibits presynaptic calcium channels, reducing further glutamate release and dampening excitatory signaling. Mechanistically, ligand binding causes a conformation change that triggers signaling via guanine nucleotide-binding proteins (G proteins) and modulates the activity of down-stream effectors, such as adenylate cyclase. May mediate suppression of neurotransmission or may be involved in synaptogenesis or synaptic stabilization. The sequence is that of Metabotropic glutamate receptor 2 (Grm2) from Rattus norvegicus (Rat).